Consider the following 199-residue polypeptide: Alkyl hydroperoxide reductase C (199 aa).

Positions 2–163 constitute a Thioredoxin domain; it reads VLVTYPAPDF…TLRMIDALHF (162 aa). The active-site Cysteine sulfenic acid (-SOH) intermediate is Cys50.

This sequence belongs to the peroxiredoxin family. AhpC/Prx1 subfamily. As to quaternary structure, homodimer; disulfide-linked, upon oxidation. 5 homodimers assemble to form a ring-like decamer.

The protein resides in the cytoplasm. It carries out the reaction a hydroperoxide + NADH + H(+) = an alcohol + NAD(+) + H2O. Thiol-specific peroxidase that catalyzes the reduction of hydrogen peroxide and organic hydroperoxides to water and alcohols, respectively. Plays a role in cell protection against oxidative stress by detoxifying peroxides. The protein is Alkyl hydroperoxide reductase C of Buchnera aphidicola subsp. Baizongia pistaciae (strain Bp).